We begin with the raw amino-acid sequence, 171 residues long: Peptide deformylase (171 aa).

Residues cysteine 91 and histidine 133 each coordinate Fe cation. The active site involves glutamate 134. A Fe cation-binding site is contributed by histidine 137.

Belongs to the polypeptide deformylase family. Fe(2+) serves as cofactor.

It catalyses the reaction N-terminal N-formyl-L-methionyl-[peptide] + H2O = N-terminal L-methionyl-[peptide] + formate. Its function is as follows. Removes the formyl group from the N-terminal Met of newly synthesized proteins. Requires at least a dipeptide for an efficient rate of reaction. N-terminal L-methionine is a prerequisite for activity but the enzyme has broad specificity at other positions. The protein is Peptide deformylase of Haemophilus ducreyi (strain 35000HP / ATCC 700724).